An 87-amino-acid polypeptide reads, in one-letter code: Small ribosomal subunit protein uS15 (87 aa).

It belongs to the universal ribosomal protein uS15 family. Part of the 30S ribosomal subunit. Forms a bridge to the 50S subunit in the 70S ribosome, contacting the 23S rRNA.

Its function is as follows. One of the primary rRNA binding proteins, it binds directly to 16S rRNA where it helps nucleate assembly of the platform of the 30S subunit by binding and bridging several RNA helices of the 16S rRNA. Functionally, forms an intersubunit bridge (bridge B4) with the 23S rRNA of the 50S subunit in the ribosome. In Ruminiclostridium cellulolyticum (strain ATCC 35319 / DSM 5812 / JCM 6584 / H10) (Clostridium cellulolyticum), this protein is Small ribosomal subunit protein uS15.